The sequence spans 1005 residues: Probable beta-galactosidase A (1005 aa).

Residues 1–18 form the signal peptide; it reads MKLLSVAAVALLAAQAAG. Positions 96, 140, 141, and 142 each coordinate substrate. N-linked (GlcNAc...) asparagine glycosylation is present at Asn-156. Asn-199 provides a ligand contact to substrate. The active-site Proton donor is Glu-200. A disulfide bond links Cys-205 and Cys-206. Residue Tyr-260 participates in substrate binding. A disulfide bond links Cys-266 and Cys-315. Residue Glu-298 is the Nucleophile of the active site. Residue Tyr-364 participates in substrate binding. Residues Asn-373, Asn-402, Asn-453, Asn-478, Asn-522, Asn-622, Asn-760, Asn-777, Asn-805, and Asn-914 are each glycosylated (N-linked (GlcNAc...) asparagine).

It belongs to the glycosyl hydrolase 35 family.

It is found in the secreted. It carries out the reaction Hydrolysis of terminal non-reducing beta-D-galactose residues in beta-D-galactosides.. Cleaves beta-linked terminal galactosyl residues from gangliosides, glycoproteins, and glycosaminoglycans. The protein is Probable beta-galactosidase A (lacA) of Aspergillus flavus (strain ATCC 200026 / FGSC A1120 / IAM 13836 / NRRL 3357 / JCM 12722 / SRRC 167).